Here is a 134-residue protein sequence, read N- to C-terminus: Profilin (134 aa).

This sequence belongs to the profilin family. Occurs in many kinds of cells as a complex with monomeric actin in a 1:1 ratio.

The protein resides in the cytoplasm. The protein localises to the cytoskeleton. Its function is as follows. Binds to actin and affects the structure of the cytoskeleton. At high concentrations, profilin prevents the polymerization of actin, whereas it enhances it at low concentrations. By binding to PIP2, it inhibits the formation of IP3 and DG. The protein is Profilin of Brassica napus (Rape).